The chain runs to 239 residues: MAEYLASIFGTEKDKVNCSFYFKIGACRHGDRCSRLHNKPTFSQTIALLNIYRNPQNSSQSADGLRCAVSDVEMQEHYDEFFEEVFTEMEEKYGEVEEMNVCDNLGDHLVGNVYVKFRREEDAEKAVIDLNNRWFNGQPIHAELSPVTDFREACCRQYEMGECTRGGFCNFMHLKPISRELRRELYGRRRKKHRSRSRSRERRSRSRDRGRGGGGGGGGGGGRERDRRRSRDRERSGRF.

Ala2 is modified (N-acetylalanine). The C3H1-type 1 zinc-finger motif lies at 12–40 (EKDKVNCSFYFKIGACRHGDRCSRLHNKP). Residue Lys39 is modified to N6-methyllysine. 2 positions are modified to phosphoserine: Ser61 and Ser145. Positions 65–147 (LRCAVSDVEM…QPIHAELSPV (83 aa)) constitute an RRM domain. The segment at 149 to 176 (DFREACCRQYEMGECTRGGFCNFMHLKP) adopts a C3H1-type 2 zinc-finger fold. At Arg165 the chain carries Omega-N-methylarginine. A disordered region spans residues 183-239 (RELYGRRRKKHRSRSRSRERRSRSRDRGRGGGGGGGGGGGRERDRRRSRDRERSGRF). Over residues 188-208 (RRRKKHRSRSRSRERRSRSRD) the composition is skewed to basic residues. Residues 212–221 (GGGGGGGGGG) show a composition bias toward gly residues. Residues 222–239 (GRERDRRRSRDRERSGRF) show a composition bias toward basic and acidic residues.

It belongs to the splicing factor SR family. Identified in the spliceosome C complex. Heterodimer with U2AF2. Interacts (via RS domain) with PHF5A (via N-terminus). Interacts with ZRANB2. Interacts with SDE2. Interacts with SF3B1. Expressed in primary spermatocytes and elongating spermatids (at protein level).

It localises to the nucleus. It is found in the nucleus speckle. Functionally, plays a critical role in both constitutive and enhancer-dependent splicing by mediating protein-protein interactions and protein-RNA interactions required for accurate 3'-splice site selection. Recruits U2 snRNP to the branch point. Directly mediates interactions between U2AF2 and proteins bound to the enhancers and thus may function as a bridge between U2AF2 and the enhancer complex to recruit it to the adjacent intron. This Mus musculus (Mouse) protein is Splicing factor U2AF 35 kDa subunit (U2af1).